Consider the following 34-residue polypeptide: MEVNILAFIATALFILVPTAFLLIIYVKTASQND.

Residues 5-25 (ILAFIATALFILVPTAFLLII) form a helical membrane-spanning segment.

This sequence belongs to the PsbM family. In terms of assembly, PSII is composed of 1 copy each of membrane proteins PsbA, PsbB, PsbC, PsbD, PsbE, PsbF, PsbH, PsbI, PsbJ, PsbK, PsbL, PsbM, PsbT, PsbX, PsbY, PsbZ, Psb30/Ycf12, at least 3 peripheral proteins of the oxygen-evolving complex and a large number of cofactors. It forms dimeric complexes.

It is found in the plastid. It localises to the chloroplast thylakoid membrane. One of the components of the core complex of photosystem II (PSII). PSII is a light-driven water:plastoquinone oxidoreductase that uses light energy to abstract electrons from H(2)O, generating O(2) and a proton gradient subsequently used for ATP formation. It consists of a core antenna complex that captures photons, and an electron transfer chain that converts photonic excitation into a charge separation. This subunit is found at the monomer-monomer interface. This Cenchrus americanus (Pearl millet) protein is Photosystem II reaction center protein M.